We begin with the raw amino-acid sequence, 430 residues long: Glutamyl-tRNA reductase (430 aa).

Substrate is bound by residues 50 to 53, Ser108, 113 to 115, and Gln119; these read TCNR and EPQ. The active-site Nucleophile is Cys51. Residue 188–193 participates in NADP(+) binding; sequence GAGEMA.

The protein belongs to the glutamyl-tRNA reductase family. As to quaternary structure, homodimer.

It catalyses the reaction (S)-4-amino-5-oxopentanoate + tRNA(Glu) + NADP(+) = L-glutamyl-tRNA(Glu) + NADPH + H(+). The protein operates within porphyrin-containing compound metabolism; protoporphyrin-IX biosynthesis; 5-aminolevulinate from L-glutamyl-tRNA(Glu): step 1/2. Functionally, catalyzes the NADPH-dependent reduction of glutamyl-tRNA(Glu) to glutamate 1-semialdehyde (GSA). The sequence is that of Glutamyl-tRNA reductase from Desulfovibrio desulfuricans (strain ATCC 27774 / DSM 6949 / MB).